The following is a 225-amino-acid chain: tRNA 2'-phosphotransferase 1 (225 aa).

Positions 1–21 are disordered; it reads MDCETRGRGRRGRGNRNEESR.

It belongs to the KptA/TPT1 family.

It carries out the reaction 2'-phospho-[ligated tRNA] + NAD(+) = mature tRNA + ADP-alpha-D-ribose 1'',2''-cyclic phosphate + nicotinamide. Its function is as follows. Catalyzes the last step of tRNA splicing, the transfer of the splice junction 2'-phosphate from ligated tRNA to NAD to produce ADP-ribose 1''-2'' cyclic phosphate. The sequence is that of tRNA 2'-phosphotransferase 1 (trpt1) from Danio rerio (Zebrafish).